The primary structure comprises 607 residues: Guanine nucleotide-binding protein-like 1 (607 aa).

A compositionally biased stretch (basic residues) spans 1 to 14 (MPRKKPFSVKQKKK). The tract at residues 1-81 (MPRKKPFSVK…GPRGYDPNRY (81 aa)) is disordered. The segment covering 15–26 (QLQDKRERKRGL) has biased composition (basic and acidic residues). Residues S32, S33, and S34 each carry the phosphoserine modification. A phosphothreonine mark is found at T48 and T50. S51 and S68 each carry phosphoserine. One can recognise a CP-type G domain in the interval 178-418 (WRQLWRVLEM…LCDCPGLIFP (241 aa)). Position 225–228 (225–228 (NKVD)) interacts with GTP. At S324 the chain carries Phosphoserine. GTP contacts are provided by residues 367–374 (GFPNVGKS) and 411–415 (DCPGL). Positions 547–607 (GPAGDEEEEE…PYALLGEDEC (61 aa)) are disordered. Residues 550–584 (GDEEEEEEEELSSSCEEEGEEDRDADEEGEGDEDT) show a composition bias toward acidic residues. A phosphoserine mark is found at S561, S562, and S563.

It belongs to the TRAFAC class YlqF/YawG GTPase family.

Its function is as follows. Possible regulatory or functional link with the histocompatibility cluster. The sequence is that of Guanine nucleotide-binding protein-like 1 (GNL1) from Pongo abelii (Sumatran orangutan).